We begin with the raw amino-acid sequence, 327 residues long: Small ribosomal subunit protein RACK1z (327 aa).

WD repeat units follow at residues 13–44, 61–91, 103–133, 148–180, 192–222, 233–262, and 293–323; these read AHTD…ILWK, GHSH…RLWD, GHTK…KLWN, GHRD…KVWN, GHTG…LLWD, EANS…KIWD, and RKVI…RVWG.

It belongs to the WD repeat G protein beta family. Ribosomal protein RACK1 subfamily. As to quaternary structure, homodimer and heterodimer with RACK1B or RACK1C. Interacts with NUDT7. Interacts with GB1, MEKK1, MKK4, MKK5, MPK3 and MPK6, but not with GPA1 or MPK4. Interacts with OFUT20. Widely expressed.

It is found in the cytoplasm. The protein localises to the nucleus. Functionally, major component of the RACK1 regulatory proteins that play a role in multiple signal transduction pathways. Involved in multiple hormone responses and developmental processes. MAPK cascade scaffolding protein involved in the protease IV and ArgC signaling pathway but not the flg22 pathway. This chain is Small ribosomal subunit protein RACK1z, found in Arabidopsis thaliana (Mouse-ear cress).